Reading from the N-terminus, the 953-residue chain is MLSKLLRLGEGRMVKRLRKVADYVNALSDDVEKLSDAELRAKTEEFKKRVADGEDLDDLLPEAFAVAREAAWRVLNQRHFDVQVMGGAALHFGNVAEMKTGEGKTLTAVLPSYLNALSGKGVHVVTVNDYLARRDSEWMGRVHRFLGLDVGVILSGMTPDERRAAYAADITYGTNNEFGFDYLRDNMAHSVDDMVQRGHNFAIVDEVDSILIDEARTPLIISGPADGASHWYQEFARIVPMMEKDVHYEVDLRKRTVGVHELGVEFVEDQLGIDNLYEAANSPLVSYLNNALKAKELFQRDKDYIVRNGEVLIVDEFTGRVLMGRRYNEGMHQAIEAKERVEIKAENQTLATITLQNYFRLYDKLSGMTGTAETEAAELHEIYKLGVVPIPTNKPMVRQDQSDLIYKTEEAKFLAVVDDVAERHAKGQPVLIGTTSVERSEYLSKMLTKRRVPHNVLNAKYHEQEANIIAEAGRRGAVTVATNMAGRGTDIVLGGNVDFLADKRLRERGLDPVETPEEYEAAWHEVLPQVKAECAKEAEQVIEAGGLYVLGTERHESRRIDNQLRGRSGRQGDPGESRFYLSLGDELMRRFNGATLETLLTRLNLPDDVPIEAKMVSRAIKSAQTQVEQQNFEVRKNVLKYDEVMNQQRKVIYAERRRILEGENLAEQAHKMLVDVITAYVDGATAEGYAEDWDLETLWTALKTLYPVGIDHRDLIDSDAVGEPGELTREELLDALIKDAERAYAEREKQIEAIAGEGAMRQLERNVLLNVIDRKWREHLYEMDYLKEGIGLRAMAQRDPLVEYQREGYDMFVGMLEALKEESVGFLFNVQVEAAPQQPQVAPQAPPPTLSEFAAAAAAKASDSAAKPDSGSVATKERAEAERPAPALRAKGIDNEAPPLTYTGPSEDGTAQVQRSGNGGRHAAPAGGSRRERREAARKQAKADRPAKSHRKG.

ATP-binding positions include Q83, 101–105, and D490; that span reads GEGKT. Residues 854–867 show a composition bias toward low complexity; sequence AAAAAAKASDSAAK. The segment at 854–953 is disordered; that stretch reads AAAAAAKASD…DRPAKSHRKG (100 aa). Positions 929–947 are enriched in basic and acidic residues; sequence SRRERREAARKQAKADRPA.

Belongs to the SecA family. As to quaternary structure, monomer and homodimer. Part of the essential Sec protein translocation apparatus which comprises SecA, SecYEG and auxiliary proteins SecDF. Other proteins may also be involved.

It is found in the cell membrane. The protein localises to the cytoplasm. It catalyses the reaction ATP + H2O + cellular proteinSide 1 = ADP + phosphate + cellular proteinSide 2.. Part of the Sec protein translocase complex. Interacts with the SecYEG preprotein conducting channel. Has a central role in coupling the hydrolysis of ATP to the transfer of proteins into and across the cell membrane, serving as an ATP-driven molecular motor driving the stepwise translocation of polypeptide chains across the membrane. The sequence is that of Protein translocase subunit SecA 1 from Mycolicibacterium smegmatis (strain ATCC 700084 / mc(2)155) (Mycobacterium smegmatis).